The following is a 373-amino-acid chain: 2-oxoglutarate oxidoreductase subunit KorB (373 aa).

The tract at residues 26-50 (TPSLTKNAGVPTTDQPQKGKDFTSD) is disordered. The segment covering 27 to 41 (PSLTKNAGVPTTDQP) has biased composition (polar residues).

KG oxidoreductase (KOR) is composed of KorA and KorB subunits. Requires Mg(2+) as cofactor.

The catalysed reaction is 2 oxidized [2Fe-2S]-[ferredoxin] + 2-oxoglutarate + CoA = succinyl-CoA + 2 reduced [2Fe-2S]-[ferredoxin] + CO2 + H(+). It participates in carbohydrate metabolism; tricarboxylic acid cycle. Component of KG oxidoreductase (KOR) that catalyzes the CoA-dependent oxidative decarboxylation of 2-oxoglutarate (alpha-ketoglutarate, KG) to succinyl-CoA. Methyl viologen can act as electron acceptor in vitro; the physiologic electron acceptor is unknown. Is involved in the alternative TCA pathway that functions concurrently with fatty acid beta-oxidation. Since a growing body of evidence indicates that lipids (for example cholesterol and fatty acids) are a predominant growth substrate for M.tuberculosis during infection, flux through KOR likely represents an important step in intermediary metabolism in vivo. KOR-dependent decarboxylation of KG also appears to be an important source of CO(2) in M.tuberculosis metabolism. The sequence is that of 2-oxoglutarate oxidoreductase subunit KorB (korB) from Mycobacterium tuberculosis (strain ATCC 25618 / H37Rv).